Consider the following 199-residue polypeptide: Probable GTP-binding protein EngB (199 aa).

Residues 24–197 (EGYEVIFAGR…GARLNTFFGY (174 aa)) enclose the EngB-type G domain. GTP contacts are provided by residues 32 to 39 (GRSNAGKS), 59 to 63 (GKTQH), 77 to 80 (DLPG), 144 to 147 (TKSD), and 176 to 178 (FSS). Residues S39 and T61 each contribute to the Mg(2+) site.

Belongs to the TRAFAC class TrmE-Era-EngA-EngB-Septin-like GTPase superfamily. EngB GTPase family. Mg(2+) is required as a cofactor.

Functionally, necessary for normal cell division and for the maintenance of normal septation. The sequence is that of Probable GTP-binding protein EngB from Ruthia magnifica subsp. Calyptogena magnifica.